We begin with the raw amino-acid sequence, 272 residues long: Thymidine phosphorylase (272 aa).

This sequence belongs to the thymidine/pyrimidine-nucleoside phosphorylase family. As to quaternary structure, homodimer.

The catalysed reaction is thymidine + phosphate = 2-deoxy-alpha-D-ribose 1-phosphate + thymine. Its function is as follows. The enzymes which catalyze the reversible phosphorolysis of pyrimidine nucleosides are involved in the degradation of these compounds and in their utilization as carbon and energy sources, or in the rescue of pyrimidine bases for nucleotide synthesis. In Metamycoplasma hominis (Mycoplasma hominis), this protein is Thymidine phosphorylase (deoA).